A 329-amino-acid chain; its full sequence is Transmembrane protein I329L (329 aa).

Positions 1-31 are cleaved as a signal peptide; sequence MLRVFIFFVFLGSGLAGRIKPQITCKYFISE. N32, N39, N44, N76, N82, and N101 each carry an N-linked (GlcNAc...) asparagine; by host glycan. Residues 32 to 239 lie on the Extracellular side of the membrane; sequence NNTWYKYNVT…NTERYKNCYP (208 aa). The stretch at 112-133 is one LRR repeat; that stretch reads ELKFLDLRYNNLQFIDYNILRK. N-linked (GlcNAc...) asparagine; by host glycans are attached at residues N185 and N219. A disulfide bridge connects residues C195 and C237. A helical transmembrane segment spans residues 240–260; that stretch reads FVLVSILCSCISFLFLIICLL. Residues 261–329 are Cytoplasmic-facing; sequence RSICKKYSCT…EKKASCSRRK (69 aa).

Belongs to the asfivirus I329L family. Highly glycosylated.

Its subcellular location is the host endoplasmic reticulum membrane. The protein localises to the host Golgi apparatus membrane. Its function is as follows. Viral TLR3 homolog that probably prevents TLR3 dimerization and subsequent induction of IFN. Inhibits dsRNA-stimulated activation of NF-kB and IRF3. This chain is Transmembrane protein I329L, found in Ornithodoros (relapsing fever ticks).